A 449-amino-acid polypeptide reads, in one-letter code: MGKYFGTDGVRGEANVELTPELAFKLGRFGGYVLSQHEPDRPRVFVARDTRISGELLESALVAGLLSVGIEVYKLGVLATPGVSYLVRTEQASAGVMISASHNPALDNGIKFFGGDGFKLADEQEAEIEALLDAKEDDLPRPSAQGLGMVVDYPEGLRKYEKFLVSTGSDLEGMKIAIDAANGAASYSARQVFLDLNADITVIGEEPDGLNINDGVGSTHPEQLQNLVKGSDFVIGLAFDGDSDRLIAVDENGEIVDGDKIMYIIGKYLSEKGRLSKNTIVTTVMSNLGFHKALDRENINKKITAVGDRYVVEEMRRSGYNLGGEQSGHVIIMDYNTTGDGQLTAIQLTKVMKETGKTLSELANEVTIYPQKLVNIYVKNDMKNKAMEVPMIAQIIEKMEAEMAGNGRILVRPSGTEPLLRVMAEAPSTEEVNYYVDTIAKVVKTEIGI.

The active-site Phosphoserine intermediate is the Ser101. Ser101, Asp240, Asp242, and Asp244 together coordinate Mg(2+). A Phosphoserine modification is found at Ser101.

Belongs to the phosphohexose mutase family. Mg(2+) serves as cofactor. Activated by phosphorylation.

The catalysed reaction is alpha-D-glucosamine 1-phosphate = D-glucosamine 6-phosphate. Its function is as follows. Catalyzes the conversion of glucosamine-6-phosphate to glucosamine-1-phosphate. This is Phosphoglucosamine mutase from Streptococcus mutans serotype c (strain ATCC 700610 / UA159).